The primary structure comprises 366 residues: MALAVRISTLTVAVTAAALLAGCERPPVDAVQRGYRGTGMQHIVNPRTLAEQIPTQQAPVATPVADNSGPRANQVFQNVKVLGHLSVAEFTRQMAAITEWVAPTEGCNYCHTENLADDSKYQKVVSRRMLEMTQKVNTQWTQHVAATGVTCYTCHRGNPVPKEIWFTAVPQNKRADFIGNLDGQNQAAKVVGLTSLPYDPFTTFLKEETNVRVYGTTALPTGTSKADIKQAEKTYGLMMHFSGALGVNCTYCHNTNGFGSWDNAAPQRATAWYGIRMARDLNNNFMEGLTKTFPAHRLGPTGDVAKINCSTCHQGAYKPLYGAQMAKDYPGLKPAPAAAAASAVEAAPVDAAASAAPVATVATAAK.

Residues Met-1–Gly-22 form the signal peptide. Cys-23 is lipidated: N-palmitoyl cysteine. The S-diacylglycerol cysteine moiety is linked to residue Cys-23. 16 residues coordinate heme: Met-94, Cys-107, Cys-110, His-111, Met-129, His-143, Cys-151, Cys-154, His-155, Met-238, Cys-249, Cys-252, His-253, Cys-309, Cys-312, and His-313.

In terms of assembly, component of the photosynthetic reaction center composed of protein subunits L (PufL), M (PufM), H (PuhA) and cytochrome C (PufC). The reaction center interacts with light-harvesting antenna complex LH1. Post-translationally, binds 4 heme groups per subunit.

The protein resides in the cellular chromatophore membrane. Its function is as follows. The reaction center of purple bacteria contains a tightly bound cytochrome molecule which re-reduces the photo oxidized primary electron donor. This Rubrivivax gelatinosus (strain NBRC 100245 / IL144) protein is Photosynthetic reaction center cytochrome c subunit (pufC).